Reading from the N-terminus, the 623-residue chain is Transketolase (623 aa).

Met-1 is modified (N-acetylmethionine). Lys-6 and Lys-11 each carry N6-acetyllysine. His-37 provides a ligand contact to substrate. Ser-40 and His-77 together coordinate thiamine diphosphate. Residue Ser-104 is modified to Phosphoserine. A thiamine diphosphate-binding site is contributed by 123–125 (GSL). Lys-144 bears the N6-acetyllysine mark. Asp-155 is a binding site for Mg(2+). Gly-156 and Asn-185 together coordinate thiamine diphosphate. Mg(2+)-binding residues include Asn-185 and Leu-187. Lys-204, Lys-232, and Lys-241 each carry N6-acetyllysine. Residues Lys-244 and His-258 each contribute to the thiamine diphosphate site. His-258 is a substrate binding site. The residue at position 260 (Lys-260) is an N6-acetyllysine. Tyr-275 carries the phosphotyrosine modification. Residue Thr-287 is modified to Phosphothreonine. At Ser-295 the chain carries Phosphoserine. Substrate-binding residues include Arg-318 and Ser-345. Phosphoserine is present on Ser-345. Residue Lys-352 forms a Glycyl lysine isopeptide (Lys-Gly) (interchain with G-Cter in SUMO2) linkage. The active-site Proton donor is the Glu-366. Thiamine diphosphate is bound at residue Phe-392. 2 residues coordinate substrate: His-416 and Asp-424. Gln-428 provides a ligand contact to thiamine diphosphate. Arg-474 provides a ligand contact to substrate. An N6-acetyllysine mark is found at Lys-538 and Lys-603.

The protein belongs to the transketolase family. Homodimer. Mg(2+) serves as cofactor. It depends on Ca(2+) as a cofactor. The cofactor is Mn(2+). Requires Co(2+) as cofactor. Thiamine diphosphate is required as a cofactor.

It catalyses the reaction D-sedoheptulose 7-phosphate + D-glyceraldehyde 3-phosphate = aldehydo-D-ribose 5-phosphate + D-xylulose 5-phosphate. Functionally, catalyzes the transfer of a two-carbon ketol group from a ketose donor to an aldose acceptor, via a covalent intermediate with the cofactor thiamine pyrophosphate. This Mus musculus (Mouse) protein is Transketolase (Tkt).